A 234-amino-acid chain; its full sequence is Sugar fermentation stimulation protein A (234 aa).

The H-T-H motif DNA-binding region spans 201-220 (LLSEAQQRGVEILAYKAELS).

Belongs to the SfsA family.

Its function is as follows. Binds to DNA non-specifically. Could be a regulatory factor involved in maltose metabolism. In Escherichia coli (strain SMS-3-5 / SECEC), this protein is Sugar fermentation stimulation protein A.